A 142-amino-acid chain; its full sequence is Large ribosomal subunit protein uL22c (142 aa).

Belongs to the universal ribosomal protein uL22 family. Part of the 50S ribosomal subunit.

The protein localises to the plastid. The protein resides in the chloroplast. Functionally, this protein binds specifically to 23S rRNA. In terms of biological role, the globular domain of the protein is located near the polypeptide exit tunnel on the outside of the subunit, while an extended beta-hairpin is found that lines the wall of the exit tunnel in the center of the 70S ribosome. This chain is Large ribosomal subunit protein uL22c (rpl22), found in Ceratophyllum demersum (Rigid hornwort).